The chain runs to 199 residues: Transgelin-2 (199 aa).

At A2 the chain carries N-acetylalanine. S11 carries the post-translational modification Phosphoserine. N6-acetyllysine is present on residues K17 and K20. Residues A24–A136 enclose the Calponin-homology (CH) domain. S163 carries the phosphoserine modification. K171 is covalently cross-linked (Glycyl lysine isopeptide (Lys-Gly) (interchain with G-Cter in SUMO2)). Residues I174–L199 form a Calponin-like repeat. T180 carries the phosphothreonine modification. Residues R182 and R196 each carry the omega-N-methylarginine modification.

This sequence belongs to the calponin family.

In Bos taurus (Bovine), this protein is Transgelin-2 (TAGLN2).